Here is an 823-residue protein sequence, read N- to C-terminus: Leucine--tRNA ligase (823 aa).

The short motif at 42 to 52 (PYPSGTLHMGH) is the 'HIGH' region element. The short motif at 575–579 (KMSKS) is the 'KMSKS' region element. Lysine 578 contributes to the ATP binding site.

The protein belongs to the class-I aminoacyl-tRNA synthetase family.

It is found in the cytoplasm. The enzyme catalyses tRNA(Leu) + L-leucine + ATP = L-leucyl-tRNA(Leu) + AMP + diphosphate. The chain is Leucine--tRNA ligase from Legionella pneumophila subsp. pneumophila (strain Philadelphia 1 / ATCC 33152 / DSM 7513).